Reading from the N-terminus, the 576-residue chain is KKIGAIAAGSAMVASALATGVFAVEKIGDVEGFKVIDNGEPTADIVVGSTAAAADVVSAANVAAKVGSMMFKEGEAASGSAKLTVKASAESDDANLKSLLTNGTNDFTELDAGKEAFVVAAADSDYSDALINATTGFANIADNVLYDQAKLAAAVSLGDLSTLSVVKDIDPSDWYADKNKAADVATKDYYDQDGDAVEMLMATVASNDDGKSLTVDEDGVLYASIAYDDDNEDFQRATQVLKEGNRLPFLGEEYALVKLDTDDDIVYLGKEVFDGVLKEGDTYNIGDGYELKVVAILKSGDEYKISLQLMKDGKVVAEKFDKVSATSALKMIYTPGNIGIVVNEAWENVGQDYGYGSTLITKDVIALELGEEYIPDWEVVTIEKDTTTDNTKDSKMTLSDDKITKDNTYGIGLQYVGDEEDNFKSGKAIKIAKYAELELDDEDKEDTKLNLFFSMDETKEATLAAGQKVTVLNSDITLSEVMADAKAPVAFKAPLAVLDTEVSLDAANKKLILVGGPVANALTKELADAGKIEMTVESPATLAVVAGAANGNDVLVVAGGDRAATAEAANALIEML.

An N-terminal signal peptide occupies residues 1–23 (KKIGAIAAGSAMVASALATGVFA). Asn102 and Asn132 each carry an N-linked (GlcNAc...) asparagine glycan.

This sequence belongs to the Mj S-layer protein family. In terms of processing, N-linked glycans consist of the 779 Da trisaccharide beta-ManNAc(Thr)-(1-4)-beta-GlcNAc3NAcA-(1-3)-beta-GlcNAc.

It is found in the secreted. The protein localises to the cell wall. Its subcellular location is the S-layer. S-layer protein. The S-layer is a paracrystalline mono-layered assembly of proteins which coat the surface of the cell. This Methanococcus voltae protein is S-layer protein (sla).